The following is a 302-amino-acid chain: Mitochondrial glycine transporter (302 aa).

3 Solcar repeats span residues His-22–His-112, Pro-119–Leu-203, and Phe-213–Lys-297. 6 helical membrane-spanning segments follow: residues Phe-28–Gln-53, Gly-87–Phe-113, Val-125–Glu-150, Gly-178–Lys-201, Leu-217–Met-243, and Gly-272–Val-290.

It belongs to the mitochondrial carrier (TC 2.A.29) family. SLC25A38 subfamily.

The protein resides in the mitochondrion inner membrane. It carries out the reaction glycine(in) = glycine(out). Its function is as follows. Mitochondrial glycine transporter that imports glycine into the mitochondrial matrix. Plays an important role in providing glycine for the first enzymatic step in heme biosynthesis, the condensation of glycine with succinyl-CoA to produce 5-aminolevulinate (ALA) in the mitochondrial matrix. Required during erythropoiesis. May play a role as pro-apoptotic protein that induces caspase-dependent apoptosis. The protein is Mitochondrial glycine transporter of Xenopus laevis (African clawed frog).